The chain runs to 295 residues: 4-diphosphocytidyl-2-C-methyl-D-erythritol kinase (295 aa).

The active site involves Lys15. Residue 101–111 coordinates ATP; sequence PIAAGLGGGSS. Residue Asp143 is part of the active site.

This sequence belongs to the GHMP kinase family. IspE subfamily.

It catalyses the reaction 4-CDP-2-C-methyl-D-erythritol + ATP = 4-CDP-2-C-methyl-D-erythritol 2-phosphate + ADP + H(+). Its pathway is isoprenoid biosynthesis; isopentenyl diphosphate biosynthesis via DXP pathway; isopentenyl diphosphate from 1-deoxy-D-xylulose 5-phosphate: step 3/6. Catalyzes the phosphorylation of the position 2 hydroxy group of 4-diphosphocytidyl-2C-methyl-D-erythritol. The protein is 4-diphosphocytidyl-2-C-methyl-D-erythritol kinase of Caulobacter vibrioides (strain ATCC 19089 / CIP 103742 / CB 15) (Caulobacter crescentus).